The chain runs to 246 residues: Short chain dehydrogenase/reductase dmxR12 (246 aa).

Positions 15, 34, 125, and 164 each coordinate NADP(+). Lysine 164 functions as the Lowers pKa of active site Tyr in the catalytic mechanism.

This sequence belongs to the short-chain dehydrogenases/reductases (SDR) family.

Its pathway is secondary metabolite biosynthesis. Functionally, short chain dehydrogenase/reductase; part of the gene cluster that mediates the biosynthesis of the dimeric xanthones cryptosporioptides. The pathway begins with the synthesis of atrochrysone thioester by the polyketide synthase dmx-nrPKS. The atrochrysone carboxyl ACP thioesterase dmxR1 then breaks the thioester bond and releases the atrochrysone carboxylic acid from dmx-nrPKS. Atrochrysone carboxylic acid is decarboxylated by the decarboxylase dmxR15, and oxidized by the anthrone oxygenase dmxR16 to yield emodin. Emodin is then reduced to emodin hydroquinone by the oxidoreductase dmxR7. A-ring reduction by the short chain dehydrogenase dmxR18, dehydration by the scytalone dehydratase-like protein dmxR17 and probable spontaneous re-oxidation, results in overall deoxygenation to chrysophanol. Baeyer-Villiger oxidation by the Baeyer-Villiger monooxygenase (BVMO) dmxR6 then yields monodictylactone in equilibrium with monodictyphenone. In the case of the cryptosporioptides biosynthesis, monodictylactone is reduced at C-12 to an alcohol (by the short chain dehydrogenases dmxR12 or dmxR8) and hydroxylated at C-5 by dmxR9, yielding the electron-rich aromatic which could eliminate H(2)O to form the ortho-quinonemethide, followed by tautomerisation to paraquinone and complete the formal reduction to produce the 10-methylgroup. Conjugate addition of C-4a-OH to the resulting paraquinone by the monooxygenase dmxR10 then gives cyclohexadienone, which is then reduced at C-5 by the short chain dehydrogenase dmxR3 to give the dihydroxanthone. The 6,7-epoxide in the cryptosporioptides could be introduced by the cytochrome P450 monooxygenase dmxL3. The highly reducing PKS dmxL2 manufactures butyrate, which is further carboxylated by dmxL1 to form ethylmalonate. It is not yet clear whether the carboxylation occurs while the butyrate is attached to the ACP of dmxL2, but this unusual fungal metabolite could then be esterified to O-5 by the O-acetyltransferase dmxR13. Finally, dimerization performed by dmxR5 gives the observed dimers cryptosporioptides A, B and C as the final products of the pathway. The polypeptide is Short chain dehydrogenase/reductase dmxR12 (Cryptosporiopsis sp. (strain 8999)).